The following is a 122-amino-acid chain: Large ribosomal subunit protein uL14 (122 aa).

It belongs to the universal ribosomal protein uL14 family. In terms of assembly, part of the 50S ribosomal subunit. Forms a cluster with proteins L3 and L19. In the 70S ribosome, L14 and L19 interact and together make contacts with the 16S rRNA in bridges B5 and B8.

Functionally, binds to 23S rRNA. Forms part of two intersubunit bridges in the 70S ribosome. This is Large ribosomal subunit protein uL14 from Syntrophus aciditrophicus (strain SB).